Consider the following 402-residue polypeptide: mRNA-capping enzyme subunit alpha (402 aa).

Lysine 66 functions as the N6-GMP-lysine intermediate in the catalytic mechanism.

This sequence belongs to the eukaryotic GTase family. Heterodimer. The mRNA-capping enzyme is composed of two separate chains alpha and beta, respectively a mRNA guanylyltransferase and an mRNA 5'-triphosphate monophosphatase.

It localises to the nucleus. It carries out the reaction a 5'-end diphospho-ribonucleoside in mRNA + GTP + H(+) = a 5'-end (5'-triphosphoguanosine)-ribonucleoside in mRNA + diphosphate. Second step of mRNA capping. Transfer of the GMP moiety of GTP to the 5'-end of RNA via an enzyme-GMP covalent reaction intermediate. The polypeptide is mRNA-capping enzyme subunit alpha (rnp-2) (Neurospora crassa (strain ATCC 24698 / 74-OR23-1A / CBS 708.71 / DSM 1257 / FGSC 987)).